A 200-amino-acid polypeptide reads, in one-letter code: GTP-binding protein ypt2 (200 aa).

16-23 (GDSGVGKS) contacts GTP. Positions 38–46 (FITTIGIDF) match the Effector region motif. Residues 64–68 (DTAGQ) and 122–125 (NKCD) contribute to the GTP site. 2 S-geranylgeranyl cysteine lipidation sites follow: C199 and C200.

This sequence belongs to the small GTPase superfamily. Rab family.

The protein resides in the cell membrane. Functionally, protein transport. Probably involved in vesicular traffic. The polypeptide is GTP-binding protein ypt2 (ypt2) (Schizosaccharomyces pombe (strain 972 / ATCC 24843) (Fission yeast)).